We begin with the raw amino-acid sequence, 469 residues long: Aspartyl/glutamyl-tRNA(Asn/Gln) amidotransferase subunit B (469 aa).

Belongs to the GatB/GatE family. GatB subfamily. Heterotrimer of A, B and C subunits.

The catalysed reaction is L-glutamyl-tRNA(Gln) + L-glutamine + ATP + H2O = L-glutaminyl-tRNA(Gln) + L-glutamate + ADP + phosphate + H(+). It carries out the reaction L-aspartyl-tRNA(Asn) + L-glutamine + ATP + H2O = L-asparaginyl-tRNA(Asn) + L-glutamate + ADP + phosphate + 2 H(+). Allows the formation of correctly charged Asn-tRNA(Asn) or Gln-tRNA(Gln) through the transamidation of misacylated Asp-tRNA(Asn) or Glu-tRNA(Gln) in organisms which lack either or both of asparaginyl-tRNA or glutaminyl-tRNA synthetases. The reaction takes place in the presence of glutamine and ATP through an activated phospho-Asp-tRNA(Asn) or phospho-Glu-tRNA(Gln). In Methanococcus maripaludis (strain DSM 14266 / JCM 13030 / NBRC 101832 / S2 / LL), this protein is Aspartyl/glutamyl-tRNA(Asn/Gln) amidotransferase subunit B.